Consider the following 615-residue polypeptide: MPKRRAGFRKGWYARQRNSLTHQMQRMTLSEPTSELPTQRQIEALMPYAWNEAHVQPPVTPTNILIMLLLLLQRVQNGAAAAFWAYIPDPPMIQSLGWDREIVPVYVNDTSLLGGKSDIHISPQQANISFYGLTTQYPMCFSYQSQHPHCIQVSADISYPRVTISGIDEKTGKKSYGNGTGPLDIPFCDKHLSIGIGIDTPWTLCRARVASVYNINNANATFLWDWAPGGTPDFPEYRGQHPPIFSVNTAPIYQTELWKLLAAFGHGNSLYLQPNISGTKYGDVGVTGFLYPRACVPYPFMLIQGHMEITLSLNIYHLNCSNCILTNCIRGVAKGEQVIIVKQPAFVMLPVEIAEAWYDETALELLQRINTALSRPKRGLSLIILGIVSLITLIATAVTACVSLAQSIQAAHTVDSLSYNVTKVMGTQEDIDKKIEDRLSALYDVVRVLGEQVQSINFRMKIQCHANYKWICVTKKPYNTSDFPWDKVKKHLQGIWFNTNLSLDLLQLHNEILDIENSPKATLNIADTVDNFLQNLFSNFPSLHSLWKTLIGLGIFVIIIAIVIFVFPCVVRGLVRDFLKMRVEMLHMKYRTMLQHRHLMELLKNKERGAAGDDP.

The N-terminal stretch at 1–84 (MPKRRAGFRK…VQNGAAAAFW (84 aa)) is a signal peptide. The Extracellular portion of the chain corresponds to 85–378 (AYIPDPPMIQ…INTALSRPKR (294 aa)). N-linked (GlcNAc...) asparagine; by host glycosylation is found at Asn-108, Asn-127, Asn-178, Asn-219, Asn-275, and Asn-319. A helical transmembrane segment spans residues 379–402 (GLSLIILGIVSLITLIATAVTACV). At 403–615 (SLAQSIQAAH…KERGAAGDDP (213 aa)) the chain is on the cytoplasmic side. 2 coiled-coil regions span residues 411-461 (AHTV…FRMK) and 495-531 (IWFN…TVDN). The interval 590–593 (YRTM) is required for cell transformation.

Interacts with sheep HYAL2 receptor.

Its subcellular location is the virion membrane. The envelope proteins induce cell transformation leading to ovine pulmonary adenocarcinoma (OPA), a contagious lung cancer of sheep and goat. They bind to the HYAL2 receptor for cell entry. Env proteins probably do not act as oncogenes by themselves, but may rather liberate an oncogenic factor that would normally be negatively regulated. One mechanism of transformation seems to involve activation of the phosphoinositide-3-OH kinase (PI3K)/Akt pathway but does not involve the virus receptor HYAL2, and the other seems to involve Env binding to HYAL2, HYAL2 degradation, and activation of the MST1R receptor tyrosine kinase, which is normally suppressed by HYAL2. In Ovis aries (Sheep), this protein is Envelope glycoprotein (env).